Reading from the N-terminus, the 169-residue chain is Prolyl-tRNA synthetase associated domain-containing protein 1 (169 aa).

The protein belongs to the PRORSD1 family.

This Mus musculus (Mouse) protein is Prolyl-tRNA synthetase associated domain-containing protein 1 (Prorsd1).